The sequence spans 173 residues: Mesogenin-1 (173 aa).

A compositionally biased stretch (polar residues) spans Glu-39–Thr-68. 2 disordered regions span residues Glu-39–Gly-69 and Thr-96–Arg-117. A compositionally biased stretch (basic residues) spans Asp-99–Ala-114. The bHLH domain maps to His-109 to Leu-163.

The protein resides in the nucleus. Its function is as follows. Involved in specifying the paraxial, but not dorsal, mesoderm. May regulate the expression of T-box transcription factors required for mesoderm formation and differentiation, such as brachyury T, wnt8, vegt and eomes. This Xenopus laevis (African clawed frog) protein is Mesogenin-1 (msgn1).